Consider the following 212-residue polypeptide: MPRSVPVMTDVIQVTKRESTGTAATRRLRRDGHVPAVLYGHGEANEHLAVPSAQVKGLLRHHSKTVQLSGDVDETALVSDMQWDPLGIEVLHMDLIRVNLKEKVELGVPIVLHGEAVGVREGGMLLENVHEVEIRCSAGSIPDNLVLEVSELGVGEHKTAGDLTLPEGVELITDVDVVIAHIEAQRDEEIAEAGDALAEPEVISKGSGEADE.

The tract at residues 190 to 212 (IAEAGDALAEPEVISKGSGEADE) is disordered.

The protein belongs to the bacterial ribosomal protein bL25 family. CTC subfamily. As to quaternary structure, part of the 50S ribosomal subunit; part of the 5S rRNA/L5/L18/L25 subcomplex. Contacts the 5S rRNA. Binds to the 5S rRNA independently of L5 and L18.

Functionally, this is one of the proteins that binds to the 5S RNA in the ribosome where it forms part of the central protuberance. In Rhodopirellula baltica (strain DSM 10527 / NCIMB 13988 / SH1), this protein is Large ribosomal subunit protein bL25.